Reading from the N-terminus, the 724-residue chain is MRKGGLTPDRDRQIEEHELQETGISPDIERLKRNINATPYQREEEEEDREEQEESVEGIFESREVPSWKKQLTIRAFVVSFALSILFSFIVMKLNLTTGIIPSLNVSAGLLGFFFVKTWTKMLHKSGLLKQPFTRQENTVIQTCVVASSGIAFSGGFGTYLFAMSHRIADQSGDVARGVKDPSLGWMIAFLFVVSFLGLFSVVPLRKIMIIDFKLPYPSGTATAHLINSFHTPQGAKLAKKQVRVLGKFFSFSFFWGFFQWFFTAGENCGFNSFPTFGLRAYQYKFYFDFSATYVGVGMICPYIINISLLLGGILSWGLMWPLIETRKGDWFPSNVDSSSMNGLQAYKVFIAVATILGDGLYNFCKVLIRTFSGLISQIRGKAGSRSSLAHKEDPPASPASPLTPRISYDDQRRTRFFLKDQIPSWFAVGGYVVISAVSTAILPHMFSQLRWYYIIVIYIFAPILAFCNAYGAGLTDWSLASTYGKLAIFTIGAWAGSDHGGLLAGLAACGVMMNIVSTASDLTQDFKTGYLTLSSPRAMFVSQVIGTAMGCLVSPCVFWLFYKAFDDLGLPNSEYPAPFATVYRSMAKLGVEGVSSLPRDCLMLCYVFFGVAILINLIKDCLGNRWGRFVPLPMAMAIPFFLGPYFAIDMCVGSFILFVWERLDAPKAEAFATAVASGLICGDGIWTLPSSVLAIAGVKPPICMKFLSAATNHRVDKFLQGSS.

The segment at 1–58 (MRKGGLTPDRDRQIEEHELQETGISPDIERLKRNINATPYQREEEEEDREEQEESVEG) is disordered. A compositionally biased stretch (basic and acidic residues) spans 8-20 (PDRDRQIEEHELQ). The residue at position 25 (Ser-25) is a Phosphoserine. Acidic residues predominate over residues 43-56 (EEEEEDREEQEESV). 7 helical membrane passes run 72-92 (LTIR…FIVM), 96-116 (LTTG…FFFV), 144-164 (CVVA…LFAM), 184-204 (LGWM…SVVP), 245-265 (VLGK…FFTA), 304-324 (IINI…WPLI), and 349-369 (VFIA…KVLI). The segment at 386 to 407 (RSSLAHKEDPPASPASPLTPRI) is disordered. A run of 8 helical transmembrane segments spans residues 423 to 443 (IPSW…TAIL), 455 to 475 (IIVI…GAGL), 478 to 497 (WSLA…AWAG), 501 to 520 (GGLL…VSTA), 541 to 561 (FVSQ…VFWL), 603 to 623 (LMLC…KDCL), 641 to 661 (FFLG…LFVW), and 679 to 699 (GLIC…IAGV).

It belongs to the YSL (TC 2.A.67.2) family.

The protein localises to the membrane. May be involved in the transport of nicotianamine-chelated metals. This is Probable metal-nicotianamine transporter YSL8 (YSL8) from Arabidopsis thaliana (Mouse-ear cress).